The following is a 350-amino-acid chain: S-adenosylmethionine:tRNA ribosyltransferase-isomerase (350 aa).

This sequence belongs to the QueA family. As to quaternary structure, monomer.

Its subcellular location is the cytoplasm. It carries out the reaction 7-aminomethyl-7-carbaguanosine(34) in tRNA + S-adenosyl-L-methionine = epoxyqueuosine(34) in tRNA + adenine + L-methionine + 2 H(+). The protein operates within tRNA modification; tRNA-queuosine biosynthesis. Its function is as follows. Transfers and isomerizes the ribose moiety from AdoMet to the 7-aminomethyl group of 7-deazaguanine (preQ1-tRNA) to give epoxyqueuosine (oQ-tRNA). The polypeptide is S-adenosylmethionine:tRNA ribosyltransferase-isomerase (Vibrio vulnificus (strain CMCP6)).